The following is a 193-amino-acid chain: Ribosomal RNA large subunit methyltransferase E (193 aa).

The S-adenosyl-L-methionine site is built by Gly-49, Phe-51, Asp-69, Asp-86, and Asp-106. Residue Lys-146 is the Proton acceptor of the active site.

It belongs to the class I-like SAM-binding methyltransferase superfamily. RNA methyltransferase RlmE family.

The protein localises to the cytoplasm. It carries out the reaction uridine(2552) in 23S rRNA + S-adenosyl-L-methionine = 2'-O-methyluridine(2552) in 23S rRNA + S-adenosyl-L-homocysteine + H(+). Functionally, specifically methylates the uridine in position 2552 of 23S rRNA at the 2'-O position of the ribose in the fully assembled 50S ribosomal subunit. In Brachyspira hyodysenteriae (strain ATCC 49526 / WA1), this protein is Ribosomal RNA large subunit methyltransferase E.